A 132-amino-acid chain; its full sequence is Small ribosomal subunit protein uS8c (132 aa).

This sequence belongs to the universal ribosomal protein uS8 family. Part of the 30S ribosomal subunit.

The protein resides in the plastid. It localises to the chloroplast. One of the primary rRNA binding proteins, it binds directly to 16S rRNA central domain where it helps coordinate assembly of the platform of the 30S subunit. The chain is Small ribosomal subunit protein uS8c (rps8) from Marchantia polymorpha (Common liverwort).